The primary structure comprises 40 residues: Antifungal protein ginkbilobin-1 (40 aa).

Positions 3-40 constitute a Gnk2-homologous domain; sequence TAFVSSAHNTQKIPAGAPFNRNLRAMLADLRQNAAFAG. Residue asparagine 11 participates in alpha-D-mannopyranose binding.

Expressed in seeds (at the protein level).

Its function is as follows. Possesses antifungal activity against B.cinerea, M.arachidicola, F.oxysporum, R.solani and C.comatus and moderate antibacterial activity against S.aureus, P.aeruginosa and E.coli. Inhibits HIV-1 reverse transcriptase and proliferation of murine splenocytes. Exerts antifungal activity through its carbohydrate-binding specificity. The polypeptide is Antifungal protein ginkbilobin-1 (Ginkgo biloba (Ginkgo)).